A 285-amino-acid chain; its full sequence is Bifunctional protein FolD (285 aa).

NADP(+) contacts are provided by residues 165–167 (GRS) and S190.

It belongs to the tetrahydrofolate dehydrogenase/cyclohydrolase family. As to quaternary structure, homodimer.

It carries out the reaction (6R)-5,10-methylene-5,6,7,8-tetrahydrofolate + NADP(+) = (6R)-5,10-methenyltetrahydrofolate + NADPH. The catalysed reaction is (6R)-5,10-methenyltetrahydrofolate + H2O = (6R)-10-formyltetrahydrofolate + H(+). It participates in one-carbon metabolism; tetrahydrofolate interconversion. In terms of biological role, catalyzes the oxidation of 5,10-methylenetetrahydrofolate to 5,10-methenyltetrahydrofolate and then the hydrolysis of 5,10-methenyltetrahydrofolate to 10-formyltetrahydrofolate. This Staphylococcus haemolyticus (strain JCSC1435) protein is Bifunctional protein FolD.